The primary structure comprises 424 residues: STAM-binding protein (424 aa).

Positions 1–127 (MSDHADVSLP…YEQYKERKKK (127 aa)) are interaction with CHMP3. Ser2 and Ser48 each carry phosphoserine. The segment at 227-231 (PAKPP) is interaction with STAM. A Phosphoserine modification is found at Ser243. In terms of domain architecture, MPN spans 257–388 (IVVPRNLCSE…LTDYGLQEIS (132 aa)). Zn(2+) contacts are provided by His335, His337, Asp348, His350, Cys390, His396, and His398. Positions 335–348 (HTHPTQTAFLSSVD) match the JAMM motif motif.

It belongs to the peptidase M67C family. In terms of assembly, interacts with STAM. Interacts with SMAD6 and SMAD7. Interacts with CHMP3; the interaction appears to relieve the autoinhibition of CHMP3. Interacts with SMURF2 and RNF11; this interaction promotes ubiquitination. Requires Zn(2+) as cofactor. Phosphorylated after BMP type I receptor activation. In terms of processing, ubiquitinated by SMURF2 in the presence of RNF11.

It localises to the nucleus. The protein localises to the membrane. The protein resides in the cytoplasm. It is found in the early endosome. With respect to regulation, inhibited by N-ethylmaleimide. In terms of biological role, zinc metalloprotease that specifically cleaves 'Lys-63'-linked polyubiquitin chains. Does not cleave 'Lys-48'-linked polyubiquitin chains. Plays a role in signal transduction for cell growth and MYC induction mediated by IL-2 and GM-CSF. Potentiates BMP (bone morphogenetic protein) signaling by antagonizing the inhibitory action of SMAD6 and SMAD7. Has a key role in regulation of cell surface receptor-mediated endocytosis and ubiquitin-dependent sorting of receptors to lysosomes. Endosomal localization of STAMBP is required for efficient EGFR degradation but not for its internalization. Involved in the negative regulation of PI3K-AKT-mTOR and RAS-MAP signaling pathways. This Rattus norvegicus (Rat) protein is STAM-binding protein (Stambp).